Reading from the N-terminus, the 190-residue chain is Probable chorismate pyruvate-lyase (190 aa).

Substrate is bound by residues arginine 74, leucine 112, and glutamate 173.

The protein belongs to the UbiC family.

It localises to the cytoplasm. The catalysed reaction is chorismate = 4-hydroxybenzoate + pyruvate. Its pathway is cofactor biosynthesis; ubiquinone biosynthesis. Removes the pyruvyl group from chorismate, with concomitant aromatization of the ring, to provide 4-hydroxybenzoate (4HB) for the ubiquinone pathway. The sequence is that of Probable chorismate pyruvate-lyase from Bordetella bronchiseptica (strain ATCC BAA-588 / NCTC 13252 / RB50) (Alcaligenes bronchisepticus).